Consider the following 200-residue polypeptide: MSYLRPAVVLLILLTLITGIAYPLLTTGLAKLMFSQQANGSLVMLGDEVVGSSLIGQNFTQLGYFSGRPSATAEMPYNSMASGGSNLAISNPELDKAITERVKSLRQANPTQTGPVPVDLVTASASGLDPQISLAAAYYQAPRIASIRQMPLSEVKQLIDSNVQKATPNFFGESVVNVLNLNMALDAQSHVKVPATSTKS.

Residues 6–26 (PAVVLLILLTLITGIAYPLLT) traverse the membrane as a helical segment.

It belongs to the KdpC family. The system is composed of three essential subunits: KdpA, KdpB and KdpC.

The protein resides in the cell inner membrane. Part of the high-affinity ATP-driven potassium transport (or Kdp) system, which catalyzes the hydrolysis of ATP coupled with the electrogenic transport of potassium into the cytoplasm. This subunit acts as a catalytic chaperone that increases the ATP-binding affinity of the ATP-hydrolyzing subunit KdpB by the formation of a transient KdpB/KdpC/ATP ternary complex. The chain is Potassium-transporting ATPase KdpC subunit from Yersinia enterocolitica serotype O:8 / biotype 1B (strain NCTC 13174 / 8081).